Reading from the N-terminus, the 557-residue chain is Ribonuclease J 2 (557 aa).

The Zn(2+) site is built by histidine 76, histidine 78, histidine 144, and glutamate 166. 366–370 (HASSH) lines the substrate pocket.

It belongs to the metallo-beta-lactamase superfamily. RNA-metabolizing metallo-beta-lactamase-like family. Bacterial RNase J subfamily. Homodimer, may be a subunit of the RNA degradosome. The cofactor is Zn(2+).

The protein resides in the cytoplasm. In terms of biological role, an RNase that has 5'-3' exonuclease and possibly endoonuclease activity. Involved in maturation of rRNA and in some organisms also mRNA maturation and/or decay. This chain is Ribonuclease J 2, found in Staphylococcus epidermidis (strain ATCC 35984 / DSM 28319 / BCRC 17069 / CCUG 31568 / BM 3577 / RP62A).